The chain runs to 552 residues: Hyaluronan synthase 2 (552 aa).

The Cytoplasmic portion of the chain corresponds to methionine 1 to arginine 11. Residues isoleucine 12 to valine 32 traverse the membrane as a helical segment. Residues glycine 33 to serine 45 are Extracellular-facing. Residues phenylalanine 46 to leucine 66 form a helical membrane-spanning segment. At glutamate 67–leucine 374 the chain is on the cytoplasmic side. Threonine 110 is subject to Phosphothreonine. Lysine 190 participates in a covalent cross-link: Glycyl lysine isopeptide (Lys-Gly) (interchain with G-Cter in ubiquitin). An O-linked (GlcNAc) serine glycan is attached at serine 221. Threonine 328 bears the Phosphothreonine mark. The chain crosses the membrane as a helical span at residues tryptophan 375 to isoleucine 395. The Extracellular portion of the chain corresponds to glutamine 396 to lysine 402. A helical transmembrane segment spans residues isoleucine 403–phenylalanine 423. The Cytoplasmic segment spans residues alanine 424–glycine 429. Residues asparagine 430–alanine 450 form a helical membrane-spanning segment. Over lysine 451–phenylalanine 475 the chain is Extracellular. A helical membrane pass occupies residues isoleucine 476–isoleucine 496. At tyrosine 497 to threonine 510 the chain is on the cytoplasmic side. Residues valine 511–valine 531 traverse the membrane as a helical segment. Over valine 532–valine 552 the chain is Extracellular.

It belongs to the NodC/HAS family. In terms of assembly, homodimer; dimerization promotes enzymatic activity. Forms heterodimer with HAS3. Forms heterodimer with HAS1. Requires Mg(2+) as cofactor. Phosphorylation at Thr-328 is essential for hyaluronan synthase activity. In terms of processing, O-GlcNAcylation at Ser-221 increases the stability of HAS2 and plasma membrane localization. Post-translationally, ubiquitination at Lys-190; this ubiquitination is essential for hyaluronan synthase activity and homo- or hetero-oligomerization. Can also be poly-ubiquitinated. Deubiquitinated by USP17 and USP4. USP17 efficiently removes 'Lys-63'- and 'Lys-48'-linked polyubiquitin chains, whereas USP4 preferentially removes monoubiquitination and, partially, both 'Lys-63'- and 'Lys-48'-linked polyubiquitin chain. As to expression, expressed in corneal endothelial cells.

Its subcellular location is the cell membrane. The protein localises to the endoplasmic reticulum membrane. It is found in the vesicle. It localises to the golgi apparatus membrane. The protein resides in the lysosome. The catalysed reaction is [hyaluronan](n) + UDP-N-acetyl-alpha-D-glucosamine = N-acetyl-beta-D-glucosaminyl-(1-&gt;4)-[hyaluronan](n) + UDP + H(+). It carries out the reaction N-acetyl-beta-D-glucosaminyl-(1-&gt;4)-[hyaluronan](n) + UDP-alpha-D-glucuronate = [hyaluronan](n+1) + UDP + H(+). It functions in the pathway glycan biosynthesis; hyaluronan biosynthesis. In terms of biological role, catalyzes the addition of GlcNAc or GlcUA monosaccharides to the nascent hyaluronan polymer. Therefore, it is essential to hyaluronan synthesis a major component of most extracellular matrices that has a structural role in tissues architectures and regulates cell adhesion, migration and differentiation. This is one of three isoenzymes responsible for cellular hyaluronan synthesis and it is particularly responsible for the synthesis of high molecular mass hyaluronan. The chain is Hyaluronan synthase 2 (HAS2) from Bos taurus (Bovine).